A 974-amino-acid polypeptide reads, in one-letter code: MKNAFLKTQLLPLRPLDESGSQWLKDITEQARKENLESLVSSLSNQGKQINFLNAVMTLSPFLREVLIANPSYLSPLLYVDIETRLSEIIEDITLIDKNKSIHETTLMAALRRKKREAHVLIALADLGGVFTYEISCAWLTRLGEAALGVALRFLLREAHDHGKINLSNREDPEKDCGLIILGMGKFGAGELNYSSDIDLIVFIDEMSPHVGNLSESIDVFSKMVRRLIRIIQERTAEGYVFRLDFRLRPDPGSTPLALPVRTALRYYEGRGQNWERAAMIKARPVAGDKSAGFNFLKELFPYVWRKYLDYAAIADIHSIKRQIHAYKNYDQISAYGHNIKLGRGGIREIEFFVQTQQLIAGGRFPQLRGRQTVAMLAELHRLGWISEKTRDSLVKSYAFLRNVEHRIQMLADEQTHILPIDVSQFTSVAYLMGYQETNSFICDLLKTLQVVEKHYAALFENEQELGLEIGNLVFTGEEDDPETLITLRRLGFERASDICRIMRTLHCGRYKSTQSAEARERLTELTPALLKAFGATKRADEVMLRFDSFLQGLPSGIQLFSLLQSNPSLLDMLVLIMGAAPRLAEIITHKPHVFDGMLDPTIFSELPTKTYLKNRLEYFLEGVISYEEILDHLRVFADEQRFLIGIRILNGAITGKKAGFAFTALADLIIAKTFATVQEEFSRLHGNIKGGRVGILGMGKLGSCELTAGSDVDLILLYEHDEDAEISDGGKPLYIFQYYTRLTQRLVAALSTLTSQGILYAVDLRLRPLGNKGPVAVSFEFFRKYYRKEAWIWEHLALTRARGIAGDLDFLQKLENEVYEIIAFSRNKKDVIKAVCEMHVLIGKGKPPENRWDLKRMPGGIMHLEFIAQFALITHVIVFQIGATTADILTQLPNSFLNQSFISDLHHAYGLYTNLSQIIRLCLNDALDLNNMPPGLSDLLLSSVGEPDLLRVEKLIEETGQLVYSIFKQVMKY.

Positions 1-464 are adenylyl removase; the sequence is MKNAFLKTQL…HYAALFENEQ (464 aa). Positions 468 to 974 are adenylyl transferase; sequence LEIGNLVFTG…YSIFKQVMKY (507 aa).

This sequence belongs to the GlnE family. Mg(2+) is required as a cofactor.

The catalysed reaction is [glutamine synthetase]-O(4)-(5'-adenylyl)-L-tyrosine + phosphate = [glutamine synthetase]-L-tyrosine + ADP. It carries out the reaction [glutamine synthetase]-L-tyrosine + ATP = [glutamine synthetase]-O(4)-(5'-adenylyl)-L-tyrosine + diphosphate. Involved in the regulation of glutamine synthetase GlnA, a key enzyme in the process to assimilate ammonia. When cellular nitrogen levels are high, the C-terminal adenylyl transferase (AT) inactivates GlnA by covalent transfer of an adenylyl group from ATP to specific tyrosine residue of GlnA, thus reducing its activity. Conversely, when nitrogen levels are low, the N-terminal adenylyl removase (AR) activates GlnA by removing the adenylyl group by phosphorolysis, increasing its activity. The regulatory region of GlnE binds the signal transduction protein PII (GlnB) which indicates the nitrogen status of the cell. This is Bifunctional glutamine synthetase adenylyltransferase/adenylyl-removing enzyme from Bartonella henselae (strain ATCC 49882 / DSM 28221 / CCUG 30454 / Houston 1) (Rochalimaea henselae).